The sequence spans 281 residues: Bidirectional sugar transporter SWEET14 (281 aa).

Topologically, residues 1 to 6 (MVLTHN) are extracellular. The helical transmembrane segment at 7–27 (VLAVTFGVLGNIISFIVFLAP) threads the bilayer. Residues 11-97 (TFGVLGNIIS…ILFITYANKK (87 aa)) enclose the MtN3/slv 1 domain. The Cytoplasmic portion of the chain corresponds to 28–42 (VPTFVRICKKKSIEG). The chain crosses the membrane as a helical span at residues 43–63 (FESLPYVSALFSAMLWIYYAL). At 64 to 70 (QKDGAGF) the chain is on the extracellular side. The chain crosses the membrane as a helical span at residues 71–91 (LLITINAVGCFIETIYIILFI). Topologically, residues 92–104 (TYANKKARISTLK) are cytoplasmic. Residues 105-125 (VLGLLNFLGFAAIILVCELLT) form a helical membrane-spanning segment. The Extracellular segment spans residues 126–132 (KGSNREK). The helical transmembrane segment at 133–153 (VLGGICVGFSVCVFAAPLSIM) threads the bilayer. Residues 133 to 216 (VLGGICVGFS…MILYVIFKYY (84 aa)) enclose the MtN3/slv 2 domain. At 154-166 (RVVIRTKSVEFMP) the chain is on the cytoplasmic side. The chain crosses the membrane as a helical span at residues 167–187 (FSLSLFLTISAITWLFYGLAI). The Extracellular portion of the chain corresponds to 188–192 (KDFYV). Residues 193 to 213 (ALPNILGAFLGAVQMILYVIF) traverse the membrane as a helical segment. At 214-281 (KYYKTPLVVD…EDQMDKKMPN (68 aa)) the chain is on the cytoplasmic side. Residues 244-259 (TPASGDLTVQPQTNPD) are compositionally biased toward polar residues. The disordered stretch occupies residues 244–281 (TPASGDLTVQPQTNPDVSHPIKTHGGDLEDQMDKKMPN). A compositionally biased stretch (basic and acidic residues) spans 267–281 (HGGDLEDQMDKKMPN).

This sequence belongs to the SWEET sugar transporter family. Forms homooligomers and/or heterooligomers.

Its subcellular location is the cell membrane. Functionally, mediates both low-affinity uptake and efflux of sugar across the plasma membrane. This Arabidopsis thaliana (Mouse-ear cress) protein is Bidirectional sugar transporter SWEET14.